The chain runs to 378 residues: tRNA (guanine(26)-N(2))-dimethyltransferase (378 aa).

In terms of domain architecture, Trm1 methyltransferase spans 4 to 374 (KEVTEGKVRI…KGYEEIIRCV (371 aa)). Positions 44, 69, 87, 114, and 115 each coordinate S-adenosyl-L-methionine. Residues Cys246, Cys249, Cys263, and Cys266 each coordinate Zn(2+).

Belongs to the class I-like SAM-binding methyltransferase superfamily. Trm1 family.

The enzyme catalyses guanosine(26) in tRNA + 2 S-adenosyl-L-methionine = N(2)-dimethylguanosine(26) in tRNA + 2 S-adenosyl-L-homocysteine + 2 H(+). In terms of biological role, dimethylates a single guanine residue at position 26 of a number of tRNAs using S-adenosyl-L-methionine as donor of the methyl groups. This is tRNA (guanine(26)-N(2))-dimethyltransferase from Saccharolobus islandicus (strain M.14.25 / Kamchatka #1) (Sulfolobus islandicus).